The following is a 282-amino-acid chain: Pantothenate synthetase (282 aa).

ATP is bound at residue 31-38 (MGYLHEGH). Histidine 38 functions as the Proton donor in the catalytic mechanism. Glutamine 62 lines the (R)-pantoate pocket. Glutamine 62 serves as a coordination point for beta-alanine. 148–151 (GEKD) is a binding site for ATP. Glutamine 154 is a binding site for (R)-pantoate. Residues valine 177 and 185-188 (YSSR) contribute to the ATP site.

Belongs to the pantothenate synthetase family. In terms of assembly, homodimer.

It localises to the cytoplasm. The catalysed reaction is (R)-pantoate + beta-alanine + ATP = (R)-pantothenate + AMP + diphosphate + H(+). Its pathway is cofactor biosynthesis; (R)-pantothenate biosynthesis; (R)-pantothenate from (R)-pantoate and beta-alanine: step 1/1. Functionally, catalyzes the condensation of pantoate with beta-alanine in an ATP-dependent reaction via a pantoyl-adenylate intermediate. The protein is Pantothenate synthetase of Aquifex aeolicus (strain VF5).